Here is a 119-residue protein sequence, read N- to C-terminus: Large ribosomal subunit protein bL20 (119 aa).

The protein belongs to the bacterial ribosomal protein bL20 family.

Its function is as follows. Binds directly to 23S ribosomal RNA and is necessary for the in vitro assembly process of the 50S ribosomal subunit. It is not involved in the protein synthesizing functions of that subunit. This is Large ribosomal subunit protein bL20 from Dichelobacter nodosus (strain VCS1703A).